A 739-amino-acid chain; its full sequence is Phosphoribosylformylglycinamidine synthase subunit PurL (739 aa).

His-53 is an active-site residue. Positions 56 and 95 each coordinate ATP. Glu-97 contributes to the Mg(2+) binding site. Residues 98–101 (SHNH) and Arg-120 contribute to the substrate site. Catalysis depends on His-99, which acts as the Proton acceptor. Asp-121 is a Mg(2+) binding site. Gln-244 is a substrate binding site. Asp-274 is a binding site for Mg(2+). Position 318-320 (318-320 (ESQ)) interacts with substrate. 2 residues coordinate ATP: Asp-501 and Gly-538. Asn-539 contacts Mg(2+). Ser-541 is a substrate binding site.

This sequence belongs to the FGAMS family. Monomer. Part of the FGAM synthase complex composed of 1 PurL, 1 PurQ and 2 PurS subunits.

Its subcellular location is the cytoplasm. The catalysed reaction is N(2)-formyl-N(1)-(5-phospho-beta-D-ribosyl)glycinamide + L-glutamine + ATP + H2O = 2-formamido-N(1)-(5-O-phospho-beta-D-ribosyl)acetamidine + L-glutamate + ADP + phosphate + H(+). The protein operates within purine metabolism; IMP biosynthesis via de novo pathway; 5-amino-1-(5-phospho-D-ribosyl)imidazole from N(2)-formyl-N(1)-(5-phospho-D-ribosyl)glycinamide: step 1/2. Functionally, part of the phosphoribosylformylglycinamidine synthase complex involved in the purines biosynthetic pathway. Catalyzes the ATP-dependent conversion of formylglycinamide ribonucleotide (FGAR) and glutamine to yield formylglycinamidine ribonucleotide (FGAM) and glutamate. The FGAM synthase complex is composed of three subunits. PurQ produces an ammonia molecule by converting glutamine to glutamate. PurL transfers the ammonia molecule to FGAR to form FGAM in an ATP-dependent manner. PurS interacts with PurQ and PurL and is thought to assist in the transfer of the ammonia molecule from PurQ to PurL. This is Phosphoribosylformylglycinamidine synthase subunit PurL from Listeria monocytogenes serovar 1/2a (strain ATCC BAA-679 / EGD-e).